Reading from the N-terminus, the 465-residue chain is 3-isopropylmalate dehydratase large subunit (465 aa).

The [4Fe-4S] cluster site is built by cysteine 347, cysteine 407, and cysteine 410. Positions 417–443 (TLKPGERSASTSNRNFEGRQGKGGRTH) are disordered.

The protein belongs to the aconitase/IPM isomerase family. LeuC type 1 subfamily. Heterodimer of LeuC and LeuD. [4Fe-4S] cluster serves as cofactor.

It catalyses the reaction (2R,3S)-3-isopropylmalate = (2S)-2-isopropylmalate. It participates in amino-acid biosynthesis; L-leucine biosynthesis; L-leucine from 3-methyl-2-oxobutanoate: step 2/4. Functionally, catalyzes the isomerization between 2-isopropylmalate and 3-isopropylmalate, via the formation of 2-isopropylmaleate. This Thermobifida fusca (strain YX) protein is 3-isopropylmalate dehydratase large subunit.